A 242-amino-acid chain; its full sequence is 1-(5-phosphoribosyl)-5-[(5-phosphoribosylamino)methylideneamino] imidazole-4-carboxamide isomerase (242 aa).

Residue Asp-10 is the Proton acceptor of the active site. Asp-131 acts as the Proton donor in catalysis.

This sequence belongs to the HisA/HisF family.

The protein resides in the cytoplasm. It catalyses the reaction 1-(5-phospho-beta-D-ribosyl)-5-[(5-phospho-beta-D-ribosylamino)methylideneamino]imidazole-4-carboxamide = 5-[(5-phospho-1-deoxy-D-ribulos-1-ylimino)methylamino]-1-(5-phospho-beta-D-ribosyl)imidazole-4-carboxamide. The protein operates within amino-acid biosynthesis; L-histidine biosynthesis; L-histidine from 5-phospho-alpha-D-ribose 1-diphosphate: step 4/9. This chain is 1-(5-phosphoribosyl)-5-[(5-phosphoribosylamino)methylideneamino] imidazole-4-carboxamide isomerase, found in Granulibacter bethesdensis (strain ATCC BAA-1260 / CGDNIH1).